Reading from the N-terminus, the 384-residue chain is Glycerol 3-phosphate oxidase (384 aa).

Positions 1–17 (MQTIDVLIVGGGVIGTS) are cleaved as a signal peptide. Isoleucine 14 is an FAD binding site. The N-palmitoyl cysteine moiety is linked to residue cysteine 18. Residue cysteine 18 is the site of S-diacylglycerol cysteine attachment. FAD-binding positions include glutamate 33, 42–43 (TS), and 47–49 (SGV). Sn-glycerol 3-phosphate-binding residues include serine 47 and histidine 51. The Proton acceptor role is filled by histidine 51. An FAD-binding site is contributed by valine 177. Positions 258 and 320 each coordinate sn-glycerol 3-phosphate. 346–347 (MK) contributes to the FAD binding site. Residue serine 348 coordinates sn-glycerol 3-phosphate. Threonine 352 is an FAD binding site.

In terms of assembly, monomer. FAD serves as cofactor.

The protein resides in the cytoplasm. Its subcellular location is the cell membrane. The catalysed reaction is sn-glycerol 3-phosphate + O2 = dihydroxyacetone phosphate + H2O2. Its pathway is polyol metabolism; glycerol degradation via glycerol kinase pathway; glycerone phosphate from sn-glycerol 3-phosphate (aerobic route): step 1/1. Its function is as follows. Catalyzes the oxidation of glycerol 3-phosphate to dihydroxyacetone phosphate (DHAP), with a reduction of O2 to H2O2. The formation of hydrogen peroxide by this enzyme is crucial for cytotoxic effects on host cells. Does not show any dehydrogenase activity with NAD(+). The protein is Glycerol 3-phosphate oxidase of Mycoplasma genitalium (strain ATCC 33530 / DSM 19775 / NCTC 10195 / G37) (Mycoplasmoides genitalium).